The primary structure comprises 373 residues: Indole glucosinolate O-methyltransferase 4 (373 aa).

Positions 217, 240, 260, 261, and 274 each coordinate S-adenosyl-L-homocysteine. The active-site Proton acceptor is H278.

It belongs to the class I-like SAM-binding methyltransferase superfamily. Cation-independent O-methyltransferase family. In terms of assembly, interacts with B'GAMMA.

Its pathway is secondary metabolite biosynthesis. Functionally, involved in indole glucosinolate biosynthesis. Catalyzes methoxylation reactions of the glucosinolate indole ring. Converts the hydroxy intermediates 4-hydroxy-indol-3-yl-methylglucosinolate (4OH-I3M) and 1-hydroxy-indol-3-yl-methylglucosinolate (1OH-I3M) to 4-methoxy-indol-3-yl-methylglucosinolate (4MO-I3M) and 1-methoxy-indol-3-yl-methylglucosinolate(1MO-I3M), respectively. The sequence is that of Indole glucosinolate O-methyltransferase 4 from Arabidopsis thaliana (Mouse-ear cress).